Reading from the N-terminus, the 423-residue chain is Glucose-6-phosphate isomerase (423 aa).

E279 functions as the Proton donor in the catalytic mechanism. Catalysis depends on residues H300 and K413.

The protein belongs to the GPI family.

It is found in the cytoplasm. It carries out the reaction alpha-D-glucose 6-phosphate = beta-D-fructose 6-phosphate. The protein operates within carbohydrate biosynthesis; gluconeogenesis. It functions in the pathway carbohydrate degradation; glycolysis; D-glyceraldehyde 3-phosphate and glycerone phosphate from D-glucose: step 2/4. Catalyzes the reversible isomerization of glucose-6-phosphate to fructose-6-phosphate. The polypeptide is Glucose-6-phosphate isomerase (Acholeplasma laidlawii (strain PG-8A)).